Reading from the N-terminus, the 207-residue chain is Elongation factor 1-beta (207 aa).

At Ala-2 the chain carries N-acetylalanine. The interval 70-96 (FPGIPTSASKEEDDDVDLFGSDEEDEE) is disordered. Over residues 80 to 96 (EEDDDVDLFGSDEEDEE) the composition is skewed to acidic residues. Ser-90 carries the post-translational modification Phosphoserine; by CK2.

Belongs to the EF-1-beta/EF-1-delta family. EF-1 is composed of 4 subunits: alpha, beta, delta, and gamma. Post-translationally, phosphorylation affects the GDP/GTP exchange rate.

In terms of biological role, EF-1-beta and EF-1-delta stimulate the exchange of GDP bound to EF-1-alpha to GTP. This is Elongation factor 1-beta from Artemia salina (Brine shrimp).